The chain runs to 155 residues: NADPH-dependent 7-cyano-7-deazaguanine reductase (155 aa).

C53 serves as the catalytic Thioimide intermediate. D60 acts as the Proton donor in catalysis. Residues 75–77 (VES) and 94–95 (HE) contribute to the substrate site.

It belongs to the GTP cyclohydrolase I family. QueF type 1 subfamily.

It localises to the cytoplasm. It catalyses the reaction 7-aminomethyl-7-carbaguanine + 2 NADP(+) = 7-cyano-7-deazaguanine + 2 NADPH + 3 H(+). Its pathway is tRNA modification; tRNA-queuosine biosynthesis. In terms of biological role, catalyzes the NADPH-dependent reduction of 7-cyano-7-deazaguanine (preQ0) to 7-aminomethyl-7-deazaguanine (preQ1). The protein is NADPH-dependent 7-cyano-7-deazaguanine reductase of Brucella suis (strain ATCC 23445 / NCTC 10510).